The primary structure comprises 356 residues: 4-hydroxy-3-methylbut-2-en-1-yl diphosphate synthase (flavodoxin) (356 aa).

[4Fe-4S] cluster contacts are provided by cysteine 262, cysteine 265, cysteine 297, and glutamate 304.

Belongs to the IspG family. [4Fe-4S] cluster is required as a cofactor.

It catalyses the reaction (2E)-4-hydroxy-3-methylbut-2-enyl diphosphate + oxidized [flavodoxin] + H2O + 2 H(+) = 2-C-methyl-D-erythritol 2,4-cyclic diphosphate + reduced [flavodoxin]. It participates in isoprenoid biosynthesis; isopentenyl diphosphate biosynthesis via DXP pathway; isopentenyl diphosphate from 1-deoxy-D-xylulose 5-phosphate: step 5/6. Its function is as follows. Converts 2C-methyl-D-erythritol 2,4-cyclodiphosphate (ME-2,4cPP) into 1-hydroxy-2-methyl-2-(E)-butenyl 4-diphosphate. In Campylobacter fetus subsp. fetus (strain 82-40), this protein is 4-hydroxy-3-methylbut-2-en-1-yl diphosphate synthase (flavodoxin).